A 772-amino-acid chain; its full sequence is Acylamino-acid-releasing enzyme 2 (772 aa).

Residues Ser617, Asp708, and His740 each act as charge relay system in the active site.

The protein belongs to the peptidase S9C family. As to quaternary structure, homotetramer.

Its subcellular location is the cytoplasm. It carries out the reaction Cleavage of an N-acetyl or N-formyl amino acid from the N-terminus of a polypeptide.. In terms of biological role, catalyzes the hydrolysis of the N-terminal peptide bond of an N-acetylated peptide to generate an N-acetylated amino acid and a peptide with a free N-terminus. This is Acylamino-acid-releasing enzyme 2 from Oryza sativa subsp. japonica (Rice).